Consider the following 224-residue polypeptide: C-&gt;U-editing enzyme APOBEC-2 (224 aa).

A disordered region spans residues Met-1–Asn-23. Positions 60 and 98 each coordinate Zn(2+). Positions Gly-64–Leu-169 constitute a CMP/dCMP-type deaminase domain. Residue Glu-100 is the Proton donor of the active site. Cys-128 and Cys-131 together coordinate Zn(2+).

It belongs to the cytidine and deoxycytidylate deaminase family. Homotetramer. The cofactor is Zn(2+). Expressed exclusively in heart and skeletal muscle.

The catalysed reaction is cytidine(6666) in apoB mRNA + H2O + H(+) = uridine(6666) in apoB mRNA + NH4(+). In terms of biological role, probable C to U editing enzyme whose physiological substrate is not yet known. Does not display detectable apoB mRNA editing. Has a low intrinsic cytidine deaminase activity. May play a role in the epigenetic regulation of gene expression through the process of active DNA demethylation. The chain is C-&gt;U-editing enzyme APOBEC-2 (Apobec2) from Mus musculus (Mouse).